The chain runs to 419 residues: UPF0229 protein TERTU_3150 (419 aa).

The segment at 63 to 111 (IFHHGSGGKNNRVLPGNDRFNGGDHIERPEQGQGGGGNGSGASDSGEGE) is disordered. Residues 83–92 (NGGDHIERPE) show a composition bias toward basic and acidic residues.

It belongs to the UPF0229 family.

The sequence is that of UPF0229 protein TERTU_3150 from Teredinibacter turnerae (strain ATCC 39867 / T7901).